Reading from the N-terminus, the 42-residue chain is Cytochrome b6-f complex subunit 7 (42 aa).

The chain crosses the membrane as a helical span at residues 19 to 37 (AVTCIFMTLFGLSLGFALL).

It belongs to the PetM family. In terms of assembly, the 4 large subunits of the cytochrome b6-f complex are cytochrome b6, subunit IV (17 kDa polypeptide, PetD), cytochrome f and the Rieske protein, while the 4 small subunits are PetG, PetL, PetM and PetN. The complex functions as a dimer.

It is found in the plastid. The protein localises to the chloroplast thylakoid membrane. Functionally, component of the cytochrome b6-f complex, which mediates electron transfer between photosystem II (PSII) and photosystem I (PSI), cyclic electron flow around PSI, and state transitions. The polypeptide is Cytochrome b6-f complex subunit 7 (Thalassiosira pseudonana (Marine diatom)).